The following is a 229-amino-acid chain: Enolase-phosphatase E1 (229 aa).

Belongs to the HAD-like hydrolase superfamily. MasA/MtnC family. In terms of assembly, monomer. Mg(2+) serves as cofactor.

It carries out the reaction 5-methylsulfanyl-2,3-dioxopentyl phosphate + H2O = 1,2-dihydroxy-5-(methylsulfanyl)pent-1-en-3-one + phosphate. The protein operates within amino-acid biosynthesis; L-methionine biosynthesis via salvage pathway; L-methionine from S-methyl-5-thio-alpha-D-ribose 1-phosphate: step 3/6. It participates in amino-acid biosynthesis; L-methionine biosynthesis via salvage pathway; L-methionine from S-methyl-5-thio-alpha-D-ribose 1-phosphate: step 4/6. In terms of biological role, bifunctional enzyme that catalyzes the enolization of 2,3-diketo-5-methylthiopentyl-1-phosphate (DK-MTP-1-P) into the intermediate 2-hydroxy-3-keto-5-methylthiopentenyl-1-phosphate (HK-MTPenyl-1-P), which is then dephosphorylated to form the acireductone 1,2-dihydroxy-3-keto-5-methylthiopentene (DHK-MTPene). The chain is Enolase-phosphatase E1 from Yersinia pseudotuberculosis serotype IB (strain PB1/+).